Consider the following 112-residue polypeptide: Mediator of RNA polymerase II transcription subunit 22 (112 aa).

Positions 83 to 112 (KPEDGGEGQLADELLDKIEDTSDGVDKETA) are disordered. The span at 96 to 112 (LLDKIEDTSDGVDKETA) shows a compositional bias: basic and acidic residues.

The protein belongs to the Mediator complex subunit 22 family. Component of the Mediator complex.

It is found in the nucleus. In terms of biological role, component of the Mediator complex, a coactivator involved in the regulated transcription of nearly all RNA polymerase II-dependent genes. Mediator functions as a bridge to convey information from gene-specific regulatory proteins to the basal RNA polymerase II transcription machinery. Mediator is recruited to promoters by direct interactions with regulatory proteins and serves as a scaffold for the assembly of a functional preinitiation complex with RNA polymerase II and the general transcription factors. This is Mediator of RNA polymerase II transcription subunit 22 (SRB6) from Yarrowia lipolytica (strain CLIB 122 / E 150) (Yeast).